Here is a 648-residue protein sequence, read N- to C-terminus: Phosphatidylinositol polyphosphate 5-phosphatase type IV (648 aa).

The interval 1-64 (MPSKSACLRH…PLSMPAKPSN (64 aa)) is disordered. Positions 36 to 54 (TSASLPAADSQSSQTNSMP) are enriched in polar residues. 2 tandem repeats follow at residues 59–62 (PAKP) and 76–79 (PQPP). Positions 59–243 (PAKPSNQNLQ…AHSNLGPSRP (185 aa)) are 4 X 4 AA repeats of P-X-X-P. The segment at 99-158 (RFRGSQEDLTVQNGASPCRGSLQDSVAQSPAYSRPLPCLSTSLQEIPKPRRATGSEGGSP) is disordered. Ser103 carries the phosphoserine modification. Residues 120 to 129 (LQDSVAQSPA) are compositionally biased toward polar residues. The stretch at 147 to 150 (PRRA) is repeat 3. Thr197 carries the phosphothreonine modification. Repeat unit 4 spans residues 240 to 243 (PSRP). 2 positions are modified to phosphoserine: Ser245 and Ser260. Cys645 carries the cysteine methyl ester modification. Cys645 carries S-farnesyl cysteine lipidation. A propeptide spans 646–648 (TVS) (removed in mature form).

This sequence belongs to the inositol 1,4,5-trisphosphate 5-phosphatase type IV family. In terms of assembly, interacts (when prenylated) with PDE6D; this is important for normal location in cilia.

It is found in the cytoplasm. It localises to the cytoskeleton. The protein localises to the cilium axoneme. The protein resides in the golgi apparatus. Its subcellular location is the golgi stack membrane. It is found in the cell membrane. It localises to the cell projection. The protein localises to the ruffle. The protein resides in the nucleus. It catalyses the reaction a 1,2-diacyl-sn-glycero-3-phospho-(1D-myo-inositol-4,5-bisphosphate) + H2O = a 1,2-diacyl-sn-glycero-3-phospho-(1D-myo-inositol 4-phosphate) + phosphate. The catalysed reaction is a 1,2-diacyl-sn-glycero-3-phospho-(1D-myo-inositol-3,4,5-trisphosphate) + H2O = a 1,2-diacyl-sn-glycero-3-phospho-(1D-myo-inositol-3,4-bisphosphate) + phosphate. The enzyme catalyses a 1,2-diacyl-sn-glycero-3-phospho-(1D-myo-inositol-3,5-bisphosphate) + H2O = a 1,2-diacyl-sn-glycero-3-phospho-(1D-myo-inositol-3-phosphate) + phosphate. Functionally, phosphatidylinositol (PtdIns) phosphatase that specifically hydrolyzes the 5-phosphate of phosphatidylinositol-3,4,5-trisphosphate (PtdIns(3,4,5)P3), phosphatidylinositol 4,5-bisphosphate PtdIns (4,5)P2 and phosphatidylinositol 3,5-bisphosphate (PtdIns(3,5)P2). Specific for lipid substrates, inactive towards water soluble inositol phosphates. Plays an essential role in the primary cilium by controlling ciliary growth and phosphoinositide 3-kinase (PI3K) signaling and stability. The protein is Phosphatidylinositol polyphosphate 5-phosphatase type IV (Inpp5e) of Rattus norvegicus (Rat).